Here is a 168-residue protein sequence, read N- to C-terminus: Photosystem I assembly protein Ycf3 (168 aa).

3 TPR repeats span residues 35-68 (AFTY…EIDP), 72-105 (SYIL…NPFL), and 120-153 (GEQA…TPGN).

It belongs to the Ycf3 family.

Its subcellular location is the plastid. It is found in the chloroplast thylakoid membrane. Essential for the assembly of the photosystem I (PSI) complex. May act as a chaperone-like factor to guide the assembly of the PSI subunits. The sequence is that of Photosystem I assembly protein Ycf3 from Gossypium barbadense (Sea Island cotton).